Here is a 403-residue protein sequence, read N- to C-terminus: MSKFNRIHLVVLDSVGIGAAPDADKFFNAGVADTDSDTLGHISETAGLAVPNMAKIGLGHIPRPVPLKTVPAEADPTGYVTKLEEVSLGKDTMTGHWEIMGLNITEPFDTFWDGFPEEIIQKIEAFSGRKVIREANKPYSGTKVIDDFGPRQMETGELIVYTSADPVLQIAAHEEVIPVEELYRICEYARSITLERPALLGRIIARPYIGEPGSFTRTANRRDYAVSPFQDTVLNKLADAGISTYAVGKINDIFNGSGITNDMGHNKSNSHGIDTLIKTLQLPAFTKGLSFTNLVDFDASFGHRRDPEGYRDCLHEFDRRLPEIIANMKDDDLLLITADHGNDPTYAGTDHTREYIPLLAYSASCTGAGVIPQGHFADISATIAENFGVDTAMIGTSFLADLV.

Residues aspartate 13, aspartate 298, histidine 303, aspartate 339, histidine 340, and histidine 351 each coordinate Mn(2+).

This sequence belongs to the phosphopentomutase family. Mn(2+) serves as cofactor.

Its subcellular location is the cytoplasm. It catalyses the reaction 2-deoxy-alpha-D-ribose 1-phosphate = 2-deoxy-D-ribose 5-phosphate. The catalysed reaction is alpha-D-ribose 1-phosphate = D-ribose 5-phosphate. It functions in the pathway carbohydrate degradation; 2-deoxy-D-ribose 1-phosphate degradation; D-glyceraldehyde 3-phosphate and acetaldehyde from 2-deoxy-alpha-D-ribose 1-phosphate: step 1/2. Its function is as follows. Isomerase that catalyzes the conversion of deoxy-ribose 1-phosphate (dRib-1-P) and ribose 1-phosphate (Rib-1-P) to deoxy-ribose 5-phosphate (dRib-5-P) and ribose 5-phosphate (Rib-5-P), respectively. In Streptococcus equi subsp. zooepidemicus (strain H70), this protein is Phosphopentomutase.